The primary structure comprises 250 residues: Sulfate transporter CysZ (250 aa).

4 consecutive transmembrane segments (helical) span residues 27–47 (FVVLPLLANIILVGGAMYYLF), 64–84 (FLSWLSYVLWPLLALTILATF), 150–170 (FLLLLIPALGQTLGPIAWFLF), and 210–230 (MLVAFFTSIPIVNLFIVPVAV).

It belongs to the CysZ family.

The protein localises to the cell inner membrane. In terms of biological role, high affinity, high specificity proton-dependent sulfate transporter, which mediates sulfate uptake. Provides the sulfur source for the cysteine synthesis pathway. In Vibrio cholerae serotype O1 (strain ATCC 39315 / El Tor Inaba N16961), this protein is Sulfate transporter CysZ.